A 470-amino-acid polypeptide reads, in one-letter code: Ribosomal protein uS12 methylthiotransferase RimO (470 aa).

The region spanning 33 to 143 (NKIGFVSLGC…VLEHVHQYAP (111 aa)) is the MTTase N-terminal domain. The [4Fe-4S] cluster site is built by C42, C78, C107, C175, C179, and C182. One can recognise a Radical SAM core domain in the interval 161–398 (LTPKHYAYLK…MLVQQEISAA (238 aa)). Residues 401–467 (QKRIGSTMQV…EYDLWGSILH (67 aa)) enclose the TRAM domain.

The protein belongs to the methylthiotransferase family. RimO subfamily. [4Fe-4S] cluster is required as a cofactor.

It localises to the cytoplasm. It carries out the reaction L-aspartate(89)-[ribosomal protein uS12]-hydrogen + (sulfur carrier)-SH + AH2 + 2 S-adenosyl-L-methionine = 3-methylsulfanyl-L-aspartate(89)-[ribosomal protein uS12]-hydrogen + (sulfur carrier)-H + 5'-deoxyadenosine + L-methionine + A + S-adenosyl-L-homocysteine + 2 H(+). In terms of biological role, catalyzes the methylthiolation of an aspartic acid residue of ribosomal protein uS12. This chain is Ribosomal protein uS12 methylthiotransferase RimO, found in Vibrio cholerae serotype O1 (strain ATCC 39315 / El Tor Inaba N16961).